The primary structure comprises 125 residues: Large ribosomal subunit protein bL12 (125 aa).

The protein belongs to the bacterial ribosomal protein bL12 family. As to quaternary structure, homodimer. Part of the ribosomal stalk of the 50S ribosomal subunit. Forms a multimeric L10(L12)X complex, where L10 forms an elongated spine to which 2 to 4 L12 dimers bind in a sequential fashion. Binds GTP-bound translation factors.

Its function is as follows. Forms part of the ribosomal stalk which helps the ribosome interact with GTP-bound translation factors. Is thus essential for accurate translation. This chain is Large ribosomal subunit protein bL12, found in Thermus thermophilus (strain ATCC BAA-163 / DSM 7039 / HB27).